Reading from the N-terminus, the 418-residue chain is UDP-N-acetylglucosamine 1-carboxyvinyltransferase (418 aa).

Residue 22 to 23 (KN) coordinates phosphoenolpyruvate. A UDP-N-acetyl-alpha-D-glucosamine-binding site is contributed by R92. C116 (proton donor) is an active-site residue. C116 carries the post-translational modification 2-(S-cysteinyl)pyruvic acid O-phosphothioketal. UDP-N-acetyl-alpha-D-glucosamine contacts are provided by D306 and I328.

This sequence belongs to the EPSP synthase family. MurA subfamily.

Its subcellular location is the cytoplasm. The catalysed reaction is phosphoenolpyruvate + UDP-N-acetyl-alpha-D-glucosamine = UDP-N-acetyl-3-O-(1-carboxyvinyl)-alpha-D-glucosamine + phosphate. Its pathway is cell wall biogenesis; peptidoglycan biosynthesis. In terms of biological role, cell wall formation. Adds enolpyruvyl to UDP-N-acetylglucosamine. This chain is UDP-N-acetylglucosamine 1-carboxyvinyltransferase, found in Shewanella amazonensis (strain ATCC BAA-1098 / SB2B).